Here is a 259-residue protein sequence, read N- to C-terminus: NAD kinase (259 aa).

Residue D43 is the Proton acceptor of the active site. Residues 43 to 44 (DG), 111 to 112 (NE), and R136 each bind NAD(+).

Belongs to the NAD kinase family. The cofactor is a divalent metal cation.

It localises to the cytoplasm. The catalysed reaction is NAD(+) + ATP = ADP + NADP(+) + H(+). Functionally, involved in the regulation of the intracellular balance of NAD and NADP, and is a key enzyme in the biosynthesis of NADP. Catalyzes specifically the phosphorylation on 2'-hydroxyl of the adenosine moiety of NAD to yield NADP. The sequence is that of NAD kinase from Mycoplasma genitalium (strain ATCC 33530 / DSM 19775 / NCTC 10195 / G37) (Mycoplasmoides genitalium).